A 508-amino-acid polypeptide reads, in one-letter code: Inosine-5'-monophosphate dehydrogenase (508 aa).

CBS domains follow at residues 111 to 170 (FITD…EITL) and 174 to 230 (MTTN…PDAS). NAD(+)-binding positions include Asp267 and 317-319 (GMG). Positions 319 and 321 each coordinate K(+). Residue Ser322 participates in IMP binding. Residue Cys324 coordinates K(+). Cys324 functions as the Thioimidate intermediate in the catalytic mechanism. Residues 357 to 359 (DGG), 380 to 381 (GF), and 404 to 408 (YRGMA) each bind IMP. The Proton acceptor role is filled by Arg420. Residue Gln432 participates in IMP binding. Gly492 lines the K(+) pocket.

The protein belongs to the IMPDH/GMPR family. In terms of assembly, homotetramer. The cofactor is K(+).

It catalyses the reaction IMP + NAD(+) + H2O = XMP + NADH + H(+). Its pathway is purine metabolism; XMP biosynthesis via de novo pathway; XMP from IMP: step 1/1. Its activity is regulated as follows. Mycophenolic acid (MPA) is a non-competitive inhibitor that prevents formation of the closed enzyme conformation by binding to the same site as the amobile flap. In contrast, mizoribine monophosphate (MZP) is a competitive inhibitor that induces the closed conformation. MPA is a potent inhibitor of mammalian IMPDHs but a poor inhibitor of the bacterial enzymes. MZP is a more potent inhibitor of bacterial IMPDH. Catalyzes the conversion of inosine 5'-phosphate (IMP) to xanthosine 5'-phosphate (XMP), the first committed and rate-limiting step in the de novo synthesis of guanine nucleotides, and therefore plays an important role in the regulation of cell growth. In Leptospira interrogans serogroup Icterohaemorrhagiae serovar Lai (strain 56601), this protein is Inosine-5'-monophosphate dehydrogenase.